The primary structure comprises 61 residues: Large ribosomal subunit protein bL32 (61 aa).

The span at M1 to R16 shows a compositional bias: basic residues. The interval M1–D20 is disordered.

This sequence belongs to the bacterial ribosomal protein bL32 family.

This Trichlorobacter lovleyi (strain ATCC BAA-1151 / DSM 17278 / SZ) (Geobacter lovleyi) protein is Large ribosomal subunit protein bL32.